Consider the following 362-residue polypeptide: Bifunctional chorismate mutase/prephenate dehydratase (362 aa).

The Chorismate mutase domain maps to 1 to 92 (MEELKELRKE…ACLSLEKKIK (92 aa)). Substrate-binding residues include R8, R25, K36, and E49. The region spanning 93–267 (VAYLGPKATF…NFTRFLVIAK (175 aa)) is the Prephenate dehydratase domain. The ACT domain occupies 279–356 (SILFGVKDEP…QFLKVLGSYP (78 aa)).

The protein localises to the cytoplasm. It carries out the reaction chorismate = prephenate. It catalyses the reaction prephenate + H(+) = 3-phenylpyruvate + CO2 + H2O. It participates in amino-acid biosynthesis; L-phenylalanine biosynthesis; phenylpyruvate from prephenate: step 1/1. It functions in the pathway metabolic intermediate biosynthesis; prephenate biosynthesis; prephenate from chorismate: step 1/1. Functionally, catalyzes the Claisen rearrangement of chorismate to prephenate and the decarboxylation/dehydration of prephenate to phenylpyruvate. The sequence is that of Bifunctional chorismate mutase/prephenate dehydratase (pheA) from Aquifex aeolicus (strain VF5).